The sequence spans 558 residues: DNA ligase B (558 aa).

Residue lysine 126 is the N6-AMP-lysine intermediate of the active site.

The protein belongs to the NAD-dependent DNA ligase family. LigB subfamily.

The catalysed reaction is NAD(+) + (deoxyribonucleotide)n-3'-hydroxyl + 5'-phospho-(deoxyribonucleotide)m = (deoxyribonucleotide)n+m + AMP + beta-nicotinamide D-nucleotide.. In terms of biological role, catalyzes the formation of phosphodiester linkages between 5'-phosphoryl and 3'-hydroxyl groups in double-stranded DNA using NAD as a coenzyme and as the energy source for the reaction. This chain is DNA ligase B, found in Pseudomonas fluorescens (strain Pf0-1).